Reading from the N-terminus, the 119-residue chain is Large ribosomal subunit protein uL18 (119 aa).

The protein belongs to the universal ribosomal protein uL18 family. In terms of assembly, part of the 50S ribosomal subunit; part of the 5S rRNA/L5/L18/L25 subcomplex. Contacts the 5S and 23S rRNAs.

This is one of the proteins that bind and probably mediate the attachment of the 5S RNA into the large ribosomal subunit, where it forms part of the central protuberance. In Cupriavidus necator (strain ATCC 17699 / DSM 428 / KCTC 22496 / NCIMB 10442 / H16 / Stanier 337) (Ralstonia eutropha), this protein is Large ribosomal subunit protein uL18.